We begin with the raw amino-acid sequence, 434 residues long: Xylose isomerase (434 aa).

Active-site residues include His100 and Asp103. Positions 231, 267, 270, 295, 306, 308, and 338 each coordinate Mg(2+).

Belongs to the xylose isomerase family. As to quaternary structure, homotetramer. Mg(2+) is required as a cofactor.

The protein localises to the cytoplasm. The enzyme catalyses alpha-D-xylose = alpha-D-xylulofuranose. In Ruegeria pomeroyi (strain ATCC 700808 / DSM 15171 / DSS-3) (Silicibacter pomeroyi), this protein is Xylose isomerase.